Consider the following 606-residue polypeptide: Scavenger receptor class A member 3 (606 aa).

The Cytoplasmic portion of the chain corresponds to 1-56; it reads MKVRSAGSDRDVLCVTEEDLAGEDEDMPSFPCTQEGRAGPRCNRCQKNLSLHTSVR. A helical; Signal-anchor for type II membrane protein membrane pass occupies residues 57–77; it reads ILYLFLTLLLVAVAVLASLVF. Over 78–606 the chain is Extracellular; that stretch reads RKVDSLSEDI…PGPPGNQSPY (529 aa). N-linked (GlcNAc...) asparagine glycans are attached at residues Asn-115, Asn-182, Asn-224, Asn-257, Asn-313, Asn-337, Asn-365, Asn-400, Asn-430, and Asn-451. The disordered stretch occupies residues 455 to 606; it reads IRGVPGPPGP…PGPPGNQSPY (152 aa). Collagen-like domains are found at residues 456 to 558 and 559 to 601; these read RGVP…PGPS and GPQG…GPPG. Residues 497-516 show a composition bias toward low complexity; the sequence is PQGQPGEPGPVGERGPAGPR. Over residues 526-535 the composition is skewed to gly residues; the sequence is GSFGTGGPRG. Pro residues-rich tracts occupy residues 548–558 and 591–606; these read PEGPPGSPGPS and PGLPGPPGPPGNQSPY.

The protein localises to the endoplasmic reticulum membrane. It is found in the golgi apparatus membrane. Seems to protect cells by scavenging oxidative molecules or harmful products of oxidation. The polypeptide is Scavenger receptor class A member 3 (Scara3) (Mus musculus (Mouse)).